We begin with the raw amino-acid sequence, 982 residues long: Zinc finger and BTB domain-containing protein 4 (982 aa).

Positions 30-131 (CDVTLIAGDT…IYSARLALPG (102 aa)) constitute a BTB domain. Lysine 40 is covalently cross-linked (Glycyl lysine isopeptide (Lys-Gly) (interchain with G-Cter in SUMO2)). Residues 71–103 (TGGSAPSPATTTAASSSSSSPPPASPHSSSPPR) are disordered. The span at 74–89 (SAPSPATTTAASSSSS) shows a compositional bias: low complexity. The segment at 165–324 (VPPAPTSMVT…CRYCEKVFAL (160 aa)) is interaction with CBFA2T3. The C2H2-type 1; atypical zinc-finger motif lies at 210 to 232 (FPCPRCGKSFIHPKRLQTHEAQC). Positions 234–255 (RGSNTRGSAGLGPGVSGSGGPA) are disordered. Positions 242–255 (AGLGPGVSGSGGPA) are enriched in gly residues. C2H2-type zinc fingers lie at residues 285–307 (YVCA…SNVH), 313–335 (YPCR…EVWH), and 341–364 (YQCI…RAFH). Residue serine 367 is modified to Phosphoserine. The segment at 404–578 (KTYSQGAPEA…QLQAPPPLCQ (175 aa)) is disordered. A compositionally biased stretch (pro residues) spans 430-446 (SPQPLPPPAPEPGPPPS). Over residues 467 to 477 (AAGGGPAGTGG) the composition is skewed to gly residues. Low complexity-rich tracts occupy residues 478–488 (SQAASVITYTT) and 507–529 (ATPT…ATAT). A Glycyl lysine isopeptide (Lys-Gly) (interchain with G-Cter in SUMO2) cross-link involves residue lysine 548. Over residues 552–565 (GLSGSGGSPTGTGR) the composition is skewed to gly residues. Lysine 590 is covalently cross-linked (Glycyl lysine isopeptide (Lys-Gly) (interchain with G-Cter in SUMO2)). The segment covering 591-600 (RRISETDLRP) has biased composition (basic and acidic residues). Disordered regions lie at residues 591-700 (RRIS…ERRH), 715-738 (LRKH…SSTR), 759-839 (QRHA…GGGS), and 854-880 (GGSR…GDRM). Positions 604–627 (SGEEVEESEEEEEEEEEEDQEEQE) are enriched in acidic residues. Positions 628–637 (ESKAGGEDQL) are enriched in basic and acidic residues. C2H2-type zinc fingers lie at residues 700-722 (HRCG…QEAH) and 739-761 (FTCP…GQRH). Phosphothreonine; by HIPK2 is present on residues threonine 769 and threonine 771. Residues 799–820 (SSSSGEAGSGSAAAAEASESAS) are compositionally biased toward low complexity. Threonine 953 carries the post-translational modification Phosphothreonine; by HIPK2.

As to quaternary structure, interacts with HIPK2. Interacts with CBFA2T3. Interacts with ZBTB38. Phosphorylated by HIPK2. This phosphorylation reduces stability and triggers ZBTB4 protein degradation in response to DNA damage. As to expression, expressed in adult and aged myogenic satellite cells.

The protein localises to the nucleus. The protein resides in the chromosome. Transcriptional repressor with bimodal DNA-binding specificity. Represses transcription in a methyl-CpG-dependent manner. Binds with a higher affinity to methylated CpG dinucleotides in the consensus sequence 5'-CGCG-3' but can also bind to the non-methylated consensus sequence 5'-CTGCNA-3' also known as the consensus kaiso binding site (KBS). Can also bind specifically to a single methyl-CpG pair and can bind hemimethylated DNA but with a lower affinity compared to methylated DNA. Plays a role in postnatal myogenesis, may be involved in the regulation of satellite cells self-renewal. In Mus musculus (Mouse), this protein is Zinc finger and BTB domain-containing protein 4 (Zbtb4).